Consider the following 348-residue polypeptide: Inactive rhomboid-related protein 2 (348 aa).

The EF-hand domain maps to 14 to 49 (IEASSWIRIFRAFDTDHDGLIQCEEMQKTIRDSTYS). Ca(2+) is bound by residues aspartate 27, aspartate 29, aspartate 31, and glutamate 38. 7 helical membrane-spanning segments follow: residues 121 to 141 (PPIFLIFLSIVQLAFYLYYVV), 177 to 197 (LINVGIFHIIFNILIQLAIGV), 207 to 227 (IYILYFMGVLFGSILSLALDP), 229 to 249 (VFLCGGAAGSFSLIASHITTI), 263 to 283 (LPILIVFAALDYVLAVYQRFF), 290 to 310 (VSMYGHLGGLVAGILFTFILF), and 323 to 343 (FWVSLVLSGFFIAICITLIAA).

This sequence belongs to the peptidase S54 family.

The protein resides in the membrane. In terms of biological role, probable inactive serine protease. This chain is Inactive rhomboid-related protein 2, found in Caenorhabditis elegans.